We begin with the raw amino-acid sequence, 38 residues long: Photosystem II reaction center protein L (38 aa).

Residues 17–37 traverse the membrane as a helical segment; sequence SLYWGLLLIFVLAVLFSNYFF.

It belongs to the PsbL family. As to quaternary structure, PSII is composed of 1 copy each of membrane proteins PsbA, PsbB, PsbC, PsbD, PsbE, PsbF, PsbH, PsbI, PsbJ, PsbK, PsbL, PsbM, PsbT, PsbX, PsbY, PsbZ, Psb30/Ycf12, at least 3 peripheral proteins of the oxygen-evolving complex and a large number of cofactors. It forms dimeric complexes.

The protein localises to the plastid. It is found in the chloroplast thylakoid membrane. Its function is as follows. One of the components of the core complex of photosystem II (PSII). PSII is a light-driven water:plastoquinone oxidoreductase that uses light energy to abstract electrons from H(2)O, generating O(2) and a proton gradient subsequently used for ATP formation. It consists of a core antenna complex that captures photons, and an electron transfer chain that converts photonic excitation into a charge separation. This subunit is found at the monomer-monomer interface and is required for correct PSII assembly and/or dimerization. The protein is Photosystem II reaction center protein L of Psilotum nudum (Whisk fern).